Consider the following 340-residue polypeptide: Phosphate acyltransferase (340 aa).

Belongs to the PlsX family. Homodimer. Probably interacts with PlsY.

It localises to the cytoplasm. It carries out the reaction a fatty acyl-[ACP] + phosphate = an acyl phosphate + holo-[ACP]. It participates in lipid metabolism; phospholipid metabolism. Its function is as follows. Catalyzes the reversible formation of acyl-phosphate (acyl-PO(4)) from acyl-[acyl-carrier-protein] (acyl-ACP). This enzyme utilizes acyl-ACP as fatty acyl donor, but not acyl-CoA. The sequence is that of Phosphate acyltransferase from Pseudomonas syringae pv. tomato (strain ATCC BAA-871 / DC3000).